Here is a 639-residue protein sequence, read N- to C-terminus: UvrABC system protein C (639 aa).

Residues 1–16 (MTDLPVDEPDRDDGAD) are compositionally biased toward acidic residues. The interval 1 to 28 (MTDLPVDEPDRDDGADQPDAGADPATPR) is disordered. The span at 17–27 (QPDAGADPATP) shows a compositional bias: low complexity. The region spanning 42–120 (SSPGVYRMID…IKKLKPRYNI (79 aa)) is the GIY-YIG domain. Residues 230–265 (KALQHDLAKRMDEAAQALDYEQAAIFRDRIKALTNV) form the UVR domain.

This sequence belongs to the UvrC family. As to quaternary structure, interacts with UvrB in an incision complex.

Its subcellular location is the cytoplasm. In terms of biological role, the UvrABC repair system catalyzes the recognition and processing of DNA lesions. UvrC both incises the 5' and 3' sides of the lesion. The N-terminal half is responsible for the 3' incision and the C-terminal half is responsible for the 5' incision. The chain is UvrABC system protein C from Rhodospirillum rubrum (strain ATCC 11170 / ATH 1.1.1 / DSM 467 / LMG 4362 / NCIMB 8255 / S1).